The following is a 670-amino-acid chain: Mannosyl-oligosaccharide alpha-1,2-mannosidase IA (670 aa).

Over 1 to 30 (MTGILPTYQRFVNGVPVPSISRRSFRLREK) the chain is Cytoplasmic. Residues 31–51 (YLIVSVLLTFGIVWLGALFYL) form a helical; Signal-anchor for type II membrane protein membrane-spanning segment. Topologically, residues 52–670 (PEFKSSNSVN…EPAHAQNNRI (619 aa)) are lumenal. Residue Asn61 is glycosylated (N-linked (GlcNAc...) asparagine). The segment at 135 to 177 (DVAPSVSSSRGPSKPPVDAIEEPAVGNNAANKDVSPSGPKAES) is disordered. Cys480 and Cys512 form a disulfide bridge. Glu526 acts as the Proton donor in catalysis. A Ca(2+)-binding site is contributed by Thr637.

Belongs to the glycosyl hydrolase 47 family. It depends on Ca(2+) as a cofactor. Post-translationally, N-glycosylated. Contains high mannose-type oligosaccharides.

The protein localises to the golgi apparatus membrane. The catalysed reaction is N(4)-(alpha-D-Man-(1-&gt;2)-alpha-D-Man-(1-&gt;2)-alpha-D-Man-(1-&gt;3)-[alpha-D-Man-(1-&gt;2)-alpha-D-Man-(1-&gt;3)-[alpha-D-Man-(1-&gt;2)-alpha-D-Man-(1-&gt;6)]-alpha-D-Man-(1-&gt;6)]-beta-D-Man-(1-&gt;4)-beta-D-GlcNAc-(1-&gt;4)-beta-D-GlcNAc)-L-asparaginyl-[protein] (N-glucan mannose isomer 9A1,2,3B1,2,3) + 4 H2O = N(4)-(alpha-D-Man-(1-&gt;3)-[alpha-D-Man-(1-&gt;3)-[alpha-D-Man-(1-&gt;6)]-alpha-D-Man-(1-&gt;6)]-beta-D-Man-(1-&gt;4)-beta-D-GlcNAc-(1-&gt;4)-beta-D-GlcNAc)-L-asparaginyl-[protein] (N-glucan mannose isomer 5A1,2) + 4 beta-D-mannose. The enzyme catalyses N(4)-(alpha-D-Man-(1-&gt;2)-alpha-D-Man-(1-&gt;2)-alpha-D-Man-(1-&gt;3)-[alpha-D-Man-(1-&gt;3)-[alpha-D-Man-(1-&gt;2)-alpha-D-Man-(1-&gt;6)]-alpha-D-Man-(1-&gt;6)]-beta-D-Man-(1-&gt;4)-beta-D-GlcNAc-(1-&gt;4)-beta-D-GlcNAc)-L-asparaginyl-[protein] (N-glucan mannose isomer 8A1,2,3B1,3) + 3 H2O = N(4)-(alpha-D-Man-(1-&gt;3)-[alpha-D-Man-(1-&gt;3)-[alpha-D-Man-(1-&gt;6)]-alpha-D-Man-(1-&gt;6)]-beta-D-Man-(1-&gt;4)-beta-D-GlcNAc-(1-&gt;4)-beta-D-GlcNAc)-L-asparaginyl-[protein] (N-glucan mannose isomer 5A1,2) + 3 beta-D-mannose. Its pathway is protein modification; protein glycosylation. With respect to regulation, strongly inhibited by 1-deoxymannojirimycin, an inhibitor of class I alpha-mannosidases, and by EDTA. EDTA inhibition is reversed by the addition of calcium, but not of magnesium. Its function is as follows. Involved in the maturation of Asn-linked oligosaccharides. Converts Man(9)GlcNAc(2) to Man(5)GlcNAc(2) primarily through the Man(7)GlcNAc(2) isomer C processing intermediate. The chain is Mannosyl-oligosaccharide alpha-1,2-mannosidase IA from Spodoptera frugiperda (Fall armyworm).